The following is a 228-amino-acid chain: Small ribosomal subunit protein uS3 (228 aa).

Positions 39–107 constitute a KH type-2 domain; that stretch reads TREYLQDKLK…PVHINIEEIR (69 aa).

The protein belongs to the universal ribosomal protein uS3 family. Part of the 30S ribosomal subunit. Forms a tight complex with proteins S10 and S14.

Binds the lower part of the 30S subunit head. Binds mRNA in the 70S ribosome, positioning it for translation. In Pseudomonas putida (strain ATCC 700007 / DSM 6899 / JCM 31910 / BCRC 17059 / LMG 24140 / F1), this protein is Small ribosomal subunit protein uS3.